We begin with the raw amino-acid sequence, 261 residues long: DNA repair protein RecO (261 aa).

Belongs to the RecO family.

In terms of biological role, involved in DNA repair and RecF pathway recombination. The protein is DNA repair protein RecO of Mycobacteroides abscessus (strain ATCC 19977 / DSM 44196 / CCUG 20993 / CIP 104536 / JCM 13569 / NCTC 13031 / TMC 1543 / L948) (Mycobacterium abscessus).